The primary structure comprises 160 residues: MRVAVIAVGRLKQGPERELADRYFERFDEAGRKLGFRELSIHEIPESRARDAATRMAEEAAAIGAYIPDKSILVALDERGQNLDSTVFARHLGRWRDEGAGHTIFVIGGADGLSPELRRKAKLAIAFGSATWPHQMVRVMLLEQLYRAATILAGHPYHRA.

2 residues coordinate S-adenosyl-L-methionine: Leu76 and Gly108.

It belongs to the RNA methyltransferase RlmH family. Homodimer.

It localises to the cytoplasm. It catalyses the reaction pseudouridine(1915) in 23S rRNA + S-adenosyl-L-methionine = N(3)-methylpseudouridine(1915) in 23S rRNA + S-adenosyl-L-homocysteine + H(+). Its function is as follows. Specifically methylates the pseudouridine at position 1915 (m3Psi1915) in 23S rRNA. This chain is Ribosomal RNA large subunit methyltransferase H, found in Bradyrhizobium diazoefficiens (strain JCM 10833 / BCRC 13528 / IAM 13628 / NBRC 14792 / USDA 110).